A 333-amino-acid chain; its full sequence is Ferrochelatase (333 aa).

2 residues coordinate Fe cation: histidine 202 and glutamate 284.

It belongs to the ferrochelatase family.

It is found in the cytoplasm. The catalysed reaction is heme b + 2 H(+) = protoporphyrin IX + Fe(2+). The protein operates within porphyrin-containing compound metabolism; protoheme biosynthesis; protoheme from protoporphyrin-IX: step 1/1. Catalyzes the ferrous insertion into protoporphyrin IX. This Francisella tularensis subsp. mediasiatica (strain FSC147) protein is Ferrochelatase.